The primary structure comprises 857 residues: Protein translocase subunit SecA (857 aa).

ATP contacts are provided by residues glutamine 88, 106 to 110, and aspartate 496; that span reads GEGKT. Cysteine 833, cysteine 835, cysteine 844, and cysteine 845 together coordinate Zn(2+).

The protein belongs to the SecA family. Monomer and homodimer. Part of the essential Sec protein translocation apparatus which comprises SecA, SecYEG and auxiliary proteins SecDF-YajC and YidC. Zn(2+) serves as cofactor.

It localises to the cell inner membrane. Its subcellular location is the cytoplasm. The enzyme catalyses ATP + H2O + cellular proteinSide 1 = ADP + phosphate + cellular proteinSide 2.. Part of the Sec protein translocase complex. Interacts with the SecYEG preprotein conducting channel. Has a central role in coupling the hydrolysis of ATP to the transfer of proteins into and across the cell membrane, serving as an ATP-driven molecular motor driving the stepwise translocation of polypeptide chains across the membrane. The protein is Protein translocase subunit SecA of Sulfurimonas denitrificans (strain ATCC 33889 / DSM 1251) (Thiomicrospira denitrificans (strain ATCC 33889 / DSM 1251)).